The sequence spans 2061 residues: MSTWVALNIEPDEAIEEEVDDTKEIQIEEALKLYQNALKLHSQGPRYYKQAGEAYEALLDSEIFKYPESLSDHKRAALQDAEPQVGGTTNDAVVGEAALDFNINDTTSSTLQQTIYLSYKNHGQYVLDALRASLQELSKLSEDSSHLSSKIAESSTTALAQFAEALERDDTDLNLWRQSARLCSALQSYRLTRFCLESVLADDDNRLEVRSEQLGLEETFAEEGLRKTLHSVQDRLSVSLVPIKKPKKALLKFFKQQSDPYPYLPSLPDNLQDLDSSRNPLAFRASTHEIKIDSLTWAAIGQAILTFLDDKNGTPSLAPGTSITISLPADSPELKTASITAQRRPSKAQVDENNNQDVQMDDAQSVGARSVTGAQGRELAMEHGDDQSSVDQRAEKQLIESLEVQSIQHQQSTDPQEDIKAEEDDLKYPENTSRKRSSGSAITEDQAERLRVKSRRTRLRDSLAEASTHTDDVVFDQAKYYEDLLEPYIQTDEGVFGTVGALLSKLGVEDLGTFEELRRSVASAGERKDSPVTPVNIDNAEVLLQDLRNVLTQWDERLYQVMQQSDSLAGLQDIKSMGRSGLAVFLEHSKKTTHKLKLKQTFSGEDELFDFIRAVNGSRLHLHDVVFEWLGCLLRPDYKNFLTHDNQFNDWSLVESSYVAYQWPTTLKDVVLQLLSLEDEYIHGKLEEGMQTLEHHILEAQSGTPFRYTAKHFADLEMIQAIYELHLDLYAPMNAPNNETDHRTRTLQQDRLARWSMLARSALTHFIDCCPERVNRERITIRHIWASTFHSNMGVDAQREHILLCLEDLKRLFSCLNEPVLSLANSSIMSELSCEAIDQEISKLNSMDFFTRIFNPDSEDPVGLIETIEPIVEPSAVQFEEGSEDRQSLQRREMGSFLDRGDATLRLFLWRRLQDAYRKIDYPPKVVSCHLRSIETIIKELRSQAYVEEPGEHRQATLVRWLKSLDGMLSKTVTTVLQESDKAYDCFDTEHVKSSMSAVAFLIRLLHSFVLYDDSVRVGQSPGIDLRAALAKSLENFKEKMRDMLVRCWVLLYTLLKEAIAQNQEMFDEPLEDRVYYLRAVHNSLGLRQMCKRSRNQFLKLVKSELLALDVEQDIEADICQILFDIHGVKLSLSDHLLSDHGCVPEKLDRSTAIMMIDFVMKQAKKINIKDLSKSELKNTIEKMQQSIGTTKAVPPVSYNRRILNAYLKTPINPSELVRAIQGVTDLPFIPVPSQTAVIANSGWYFLLGYAALTKFRSQKRLNPVPTTDLDEAISWFRQDLEHNTSRWESWYRLAQVWDSKVEEDITWSADKINNNRTELVTWQRNAIHCYAMAVATAAKTAESGPETGALLADLYTDFGIRLYSSSREPLSMAAFSVADFTRHFSNEESQQMYEGRPFKEMKVYNVWRLAAFLLRQALVDKPKNWMTHYMLSKCLWKMFSCDDSVRGSSKRISLDSVLDSLLDTIDALPQRKDSRSEPIFEPHYKLVSIIHKLVIKEVLTPAEASKTLVATPWARKVPACEDRNSWKKYILDVLKNLKNADKANWHHRMAVRSARIIYDDNKGAIAAAEAKSELTQQIFTKTMTIQVWKPEYERPGRHFVYTTRYAYFFVTLLDQLDDRANLEQLLRRVRKKQGDFINHTKLWEDMCLTYARVIRRAAGISEGHEESVFKPIGWEEFSSNTARLEELPQLAPESPSLLELLRDAIELKKLNNNLMKVALLEDLIADVYSRIYEVNLPILLEQVDEENKEKMKVDHILMTADGAATADTSTPPTSAPASEAPAPRGRTKGIARRDIQKRAEAIVSRKVPPRAPATKAPTTTETESATNATNSVGPKPVVEISVRQPPAAVVDSAGQQSDIPNSLHDSADDESELSEIDEDKLSKLAADPKMLFPNFGHRSRGSLEPDSELSAQASPSGDADVANENEEVGELEGDDREGEDEGEAGPDADLEEESMNDGDGDGDGDEAGEGEGENENENGNDGNVSGNDEDDDVDMEAGEEEEEAPGQDGEIEGNTTMEGTDAADGEDPEHVHRQEQEQEQQVGGEQEGETVYDTELATEL.

3 disordered regions span residues 339 to 370 (ITAQ…GARS), 403 to 460 (EVQS…TRLR), and 1765 to 2061 (ATAD…ATEL). Polar residues predominate over residues 403 to 414 (EVQSIQHQQSTD). Positions 1765 to 1784 (ATADTSTPPTSAPASEAPAP) are enriched in low complexity. A compositionally biased stretch (basic and acidic residues) spans 1792–1801 (ARRDIQKRAE). A compositionally biased stretch (low complexity) spans 1813–1832 (PATKAPTTTETESATNATNS). Composition is skewed to acidic residues over residues 1868 to 1879 (ADDESELSEIDE), 1922 to 1979 (VANE…ENEN), 1988 to 2012 (NDED…DGEI), and 2047 to 2061 (QEGE…ATEL).

It belongs to the HIR3 family.

The protein localises to the nucleus. In terms of biological role, has a role in a nucleosome assembly pathway that is required for the integrity of heterochromatin and proper chromosome segregation. This chain is Histone transcription regulator 3 homolog (hir3), found in Emericella nidulans (strain FGSC A4 / ATCC 38163 / CBS 112.46 / NRRL 194 / M139) (Aspergillus nidulans).